The sequence spans 878 residues: MQPYNQSVNEVLEETKSQFEGLSPKEVKNRQAKDGFNELKEKKKTSTWELFIDTLKDPMVIILLLVAFVQLFLGEFVESLVIFIVLMINSVVAVVQTKRAESSLDALRQMSAPSAKVLRNGEKTSIPARELVVGDIVSLEAGDFIPADGRLIDVQNLRVEEGMLTGESEPVEKFSDVIEGEVALGDRKNMVFSSSLVVYGRADFLVTAIAEQTEIGKIAQMLETAEAKQTPLQQKLEKFGKQLGWVILALCALIFAVQILRLFTTNQTADMQKAVLDSFMFAVAVAVAAIPEALSSVVTIVLSVGTNKMAKQHAIMRNLPAVETLGSTSVICTDKTGTLTQNKMTVVDSFLPTQGSKELTDLTQADQKLLLNAMVLCNDSSFSQEGQLLGDPTEVALIAYSDKIGYPYQDLREKSPRLAEFPFDSERKLMSTINDFEGQKTIFVKGGPDVLFNRCNQVFLDGKVQEFTPELKEKFQAQNEAFSQKALRVLAYAYKPVSDNKTELTLTDENDLILIGLSAMIDPPREAVYDSIAEAKKAGIKTIMITGDHKTTAQAIAKDIGLMNEGDMALTGQELDALTEDELRENLEKISVYARVSPENKIRIVRAWQNEHQVTAMTGDGVNDAPALKQANIGIAMGSGTDVAKDASSMILTDDNFVSIVSAVSIGRVVYDNIKKSISYLFSGNLGAIIAIVFALVVGWVNPFTALQLLFINLVNDSVPAIALGMEKAEPDVMEKAPRQLNEGIFANGLMRVILIRGSLIGIAAIISQYVGQKTSPEMGVAMAFTTLILARTLQTFAARSNSQNILKLGFTTNKYVLMAVTFCLALYSLTTLPFLREIFSIPAAFGWSQWIVAAGLAVIAVICMEILKSIKGVFEKH.

A run of 4 helical transmembrane segments spans residues L50–F72, F76–V95, L243–F263, and F281–V301. Positions 287, 288, 290, and 292 each coordinate Ca(2+). The active-site 4-aspartylphosphate intermediate is D334. The next 6 helical transmembrane spans lie at L681–V701, F704–L724, V753–Q773, M779–A799, Y816–L836, and A845–M865. Residues N713 and D717 each coordinate Ca(2+).

The protein belongs to the cation transport ATPase (P-type) (TC 3.A.3) family. Type IIA subfamily.

It localises to the cell membrane. It carries out the reaction Ca(2+)(in) + ATP + H2O = Ca(2+)(out) + ADP + phosphate + H(+). Its activity is regulated as follows. Inhibited by very high concentrations of cyclopiazonic acid (CPA). Catalyzes the hydrolysis of ATP coupled with the transport of calcium. The sequence is that of Calcium-transporting ATPase 1 (yoaB) from Lactococcus lactis subsp. lactis (strain IL1403) (Streptococcus lactis).